Consider the following 248-residue polypeptide: 3-deoxy-manno-octulosonate cytidylyltransferase (248 aa).

The protein belongs to the KdsB family.

It is found in the cytoplasm. It carries out the reaction 3-deoxy-alpha-D-manno-oct-2-ulosonate + CTP = CMP-3-deoxy-beta-D-manno-octulosonate + diphosphate. It participates in nucleotide-sugar biosynthesis; CMP-3-deoxy-D-manno-octulosonate biosynthesis; CMP-3-deoxy-D-manno-octulosonate from 3-deoxy-D-manno-octulosonate and CTP: step 1/1. Its pathway is bacterial outer membrane biogenesis; lipopolysaccharide biosynthesis. Activates KDO (a required 8-carbon sugar) for incorporation into bacterial lipopolysaccharide in Gram-negative bacteria. This chain is 3-deoxy-manno-octulosonate cytidylyltransferase, found in Leptospira interrogans serogroup Icterohaemorrhagiae serovar copenhageni (strain Fiocruz L1-130).